Here is a 208-residue protein sequence, read N- to C-terminus: ATP phosphoribosyltransferase (208 aa).

Belongs to the ATP phosphoribosyltransferase family. Short subfamily. As to quaternary structure, heteromultimer composed of HisG and HisZ subunits.

It is found in the cytoplasm. It catalyses the reaction 1-(5-phospho-beta-D-ribosyl)-ATP + diphosphate = 5-phospho-alpha-D-ribose 1-diphosphate + ATP. Its pathway is amino-acid biosynthesis; L-histidine biosynthesis; L-histidine from 5-phospho-alpha-D-ribose 1-diphosphate: step 1/9. Functionally, catalyzes the condensation of ATP and 5-phosphoribose 1-diphosphate to form N'-(5'-phosphoribosyl)-ATP (PR-ATP). Has a crucial role in the pathway because the rate of histidine biosynthesis seems to be controlled primarily by regulation of HisG enzymatic activity. This Hydrogenovibrio crunogenus (strain DSM 25203 / XCL-2) (Thiomicrospira crunogena) protein is ATP phosphoribosyltransferase.